The primary structure comprises 447 residues: Phosphoglucosamine mutase (447 aa).

The active-site Phosphoserine intermediate is the S100. Residues S100, D239, D241, and D243 each contribute to the Mg(2+) site. At S100 the chain carries Phosphoserine.

This sequence belongs to the phosphohexose mutase family. Mg(2+) serves as cofactor. Activated by phosphorylation.

It carries out the reaction alpha-D-glucosamine 1-phosphate = D-glucosamine 6-phosphate. Functionally, catalyzes the conversion of glucosamine-6-phosphate to glucosamine-1-phosphate. The polypeptide is Phosphoglucosamine mutase (Thermoanaerobacter sp. (strain X514)).